The chain runs to 383 residues: Homoserine O-succinyltransferase (383 aa).

The 310-residue stretch at 51-360 (NAILLCHALS…EAEHGHDSFL (310 aa)) folds into the AB hydrolase-1 domain. The active-site Nucleophile is Ser-157. Arg-227 lines the substrate pocket. Residues Asp-323 and His-356 contribute to the active site. Position 357 (Asp-357) interacts with substrate.

Belongs to the AB hydrolase superfamily. MetX family. As to quaternary structure, homodimer.

Its subcellular location is the cytoplasm. It carries out the reaction L-homoserine + succinyl-CoA = O-succinyl-L-homoserine + CoA. The protein operates within amino-acid biosynthesis; L-methionine biosynthesis via de novo pathway; O-succinyl-L-homoserine from L-homoserine: step 1/1. Functionally, transfers a succinyl group from succinyl-CoA to L-homoserine, forming succinyl-L-homoserine. The chain is Homoserine O-succinyltransferase from Acidithiobacillus ferrooxidans (strain ATCC 23270 / DSM 14882 / CIP 104768 / NCIMB 8455) (Ferrobacillus ferrooxidans (strain ATCC 23270)).